The sequence spans 236 residues: MEILPAIDLKNGFAVRLKKGEMNSAKIYSDKPWELAEKFADLGAKWLHIVDLDGAFAGEAKNAKTIEKIVKSTNLKIEVGGGIRDEERIKFYKNSGVSRFILGSAALKNPEFVKQMAKKYKIAVGIDAKNGFVATEGWAEVSNIKACELAKIYADAGVEAIICTDISKDGMLSGVNVKFSEEIAKSSGIKTIASGGVKDLSDIKALKQSGKIYGVIVGKAYYEGSIDLKEAFLIAK.

The Proton acceptor role is filled by Asp8. The Proton donor role is filled by Asp127.

Belongs to the HisA/HisF family.

The protein resides in the cytoplasm. It catalyses the reaction 1-(5-phospho-beta-D-ribosyl)-5-[(5-phospho-beta-D-ribosylamino)methylideneamino]imidazole-4-carboxamide = 5-[(5-phospho-1-deoxy-D-ribulos-1-ylimino)methylamino]-1-(5-phospho-beta-D-ribosyl)imidazole-4-carboxamide. The protein operates within amino-acid biosynthesis; L-histidine biosynthesis; L-histidine from 5-phospho-alpha-D-ribose 1-diphosphate: step 4/9. This Campylobacter hominis (strain ATCC BAA-381 / DSM 21671 / CCUG 45161 / LMG 19568 / NCTC 13146 / CH001A) protein is 1-(5-phosphoribosyl)-5-[(5-phosphoribosylamino)methylideneamino] imidazole-4-carboxamide isomerase.